Consider the following 550-residue polypeptide: Complement control protein (550 aa).

Residues 1-19 (MAFLRQTLWILWTFTMVIG) form the signal peptide. Sushi domains follow at residues 23–83 (EKCS…TCNK), 84–150 (KSCP…FCEK), 151–209 (EKCH…TCEL), and 210–268 (AGCK…KCVL). 8 disulfide bridges follow: C25–C68, C53–C81, C86–C131, C116–C148, C153–C194, C180–C207, C212–C254, and C240–C266. 2 N-linked (GlcNAc...) asparagine; by host glycosylation sites follow: N63 and N111. N197 carries an N-linked (GlcNAc...) asparagine; by host glycan. N-linked (GlcNAc...) asparagine; by host glycosylation is found at N255, N275, and N299. Residues 269–338 (EDIDDPNNSN…TSEGFNETTT (70 aa)) form a disordered region. Polar residues-rich tracts occupy residues 288 to 302 (EKPN…NYTE) and 312 to 321 (TAATCDTNCE). N-linked (GlcNAc...) asparagine; by host glycosylation is found at N334, N371, N374, and N378. 2 disordered regions span residues 387–408 (TPTS…NYNT) and 420–516 (IEEG…RPPA). Residues 424-440 (PSNSTTSEKATASTLSH) show a composition bias toward polar residues. Residues N426, N445, N455, and N483 are each glycosylated (N-linked (GlcNAc...) asparagine; by host). Residues 450 to 476 (IYTTLNKTTQLPSTNKPTNSQAKSSTK) are compositionally biased toward polar residues. Residues 484-495 (KTTSNPAISLTD) show a composition bias toward polar residues. A helical transmembrane segment spans residues 528 to 548 (IGLLTAVALTCGLITLFHYLF).

It localises to the host membrane. Its subcellular location is the virion membrane. Inhibits the complement component of the host innate immune response. Regulates host C3 convertases, accelerating their decay, and acts as a cofactor for factor I degradation of C4b and C3b. Also binds heparin, and therefore may play two distinct roles when incorporated in virion membranes: immune evasion and host cell binding. In Human herpesvirus 8 type P (isolate GK18) (HHV-8), this protein is Complement control protein (ORF4).